The sequence spans 64 residues: DNA gyrase inhibitor YacG (64 aa).

Cysteine 9, cysteine 12, cysteine 28, and cysteine 32 together coordinate Zn(2+). A disordered region spans residues 45-64 (KRIPSSGDLSESDDWSEEQK). Residues 54 to 64 (SESDDWSEEQK) show a composition bias toward acidic residues.

This sequence belongs to the DNA gyrase inhibitor YacG family. As to quaternary structure, interacts with GyrB. Requires Zn(2+) as cofactor.

Its function is as follows. Inhibits all the catalytic activities of DNA gyrase by preventing its interaction with DNA. Acts by binding directly to the C-terminal domain of GyrB, which probably disrupts DNA binding by the gyrase. The sequence is that of DNA gyrase inhibitor YacG from Citrobacter koseri (strain ATCC BAA-895 / CDC 4225-83 / SGSC4696).